We begin with the raw amino-acid sequence, 305 residues long: Oxygen-dependent coproporphyrinogen-III oxidase (305 aa).

Residue S98 coordinates substrate. A divalent metal cation-binding residues include H102 and H112. Catalysis depends on H112, which acts as the Proton donor. Residue 114-116 (NVR) coordinates substrate. H151 and H181 together coordinate a divalent metal cation. Positions 246–281 (YVEFNLVYDRGTLFGLQSGGRTESILMSMPPLARWE) are important for dimerization. 264-266 (GGR) serves as a coordination point for substrate.

It belongs to the aerobic coproporphyrinogen-III oxidase family. In terms of assembly, homodimer. A divalent metal cation is required as a cofactor.

It is found in the cytoplasm. It catalyses the reaction coproporphyrinogen III + O2 + 2 H(+) = protoporphyrinogen IX + 2 CO2 + 2 H2O. It participates in porphyrin-containing compound metabolism; protoporphyrin-IX biosynthesis; protoporphyrinogen-IX from coproporphyrinogen-III (O2 route): step 1/1. Functionally, involved in the heme biosynthesis. Catalyzes the aerobic oxidative decarboxylation of propionate groups of rings A and B of coproporphyrinogen-III to yield the vinyl groups in protoporphyrinogen-IX. This chain is Oxygen-dependent coproporphyrinogen-III oxidase, found in Vibrio vulnificus (strain CMCP6).